A 409-amino-acid chain; its full sequence is Peptidase T (409 aa).

H78 provides a ligand contact to Zn(2+). D80 is an active-site residue. D140 provides a ligand contact to Zn(2+). Residue E173 is the Proton acceptor of the active site. Zn(2+) contacts are provided by E174, D196, and H379.

This sequence belongs to the peptidase M20B family. Zn(2+) serves as cofactor.

The protein resides in the cytoplasm. It catalyses the reaction Release of the N-terminal residue from a tripeptide.. Its function is as follows. Cleaves the N-terminal amino acid of tripeptides. The chain is Peptidase T from Salmonella heidelberg (strain SL476).